A 207-amino-acid polypeptide reads, in one-letter code: MIRKCTEHGYFRGGSCQQCKRPGRYVLDDSREEKLGRFVSGTLRHFPASAGVKMDEYGWVDLNAFCDVMKKRYNWMRKEYLYALVESDEKGRYQIRGFMIRARYGHSVNIELDYEESDAPYVYYGASPEEVDVLLENGIFPIKQRYVHLSTSYEKAAEVALIHTESPVILQVDAFRAQEDGISLKLATDYIVLAEKIPPEYLYVIEE.

Belongs to the KptA/TPT1 family.

Functionally, removes the 2'-phosphate from RNA via an intermediate in which the phosphate is ADP-ribosylated by NAD followed by a presumed transesterification to release the RNA and generate ADP-ribose 1''-2''-cyclic phosphate (APPR&gt;P). May function as an ADP-ribosylase. This Methanosarcina acetivorans (strain ATCC 35395 / DSM 2834 / JCM 12185 / C2A) protein is Probable RNA 2'-phosphotransferase.